The sequence spans 254 residues: Sensory rhodopsin (254 aa).

Over 1-4 the chain is Extracellular; sequence MTGA. A helical transmembrane segment spans residues 5 to 26; that stretch reads VTSAYWLAAVAFLIGVGITAAL. Over 27–35 the chain is Cytoplasmic; it reads YAKLEGSRA. A helical transmembrane segment spans residues 36-57; the sequence is RTRLAALAVIPGFAGLSYVGMA. Residues 58–71 lie on the Extracellular side of the membrane; that stretch reads LGIGTVTVNGAELV. Residues 72-93 traverse the membrane as a helical segment; the sequence is GLRYVDWVVTTPLLVGFIGYNA. At 94-96 the chain is on the cytoplasmic side; that stretch reads GAS. Residues 97–119 form a helical membrane-spanning segment; sequence RRAIAGVMIADALMIVFGAAAVV. Over 120-123 the chain is Extracellular; sequence SGGT. Residues 124-151 form a helical membrane-spanning segment; sequence LKWALFGVSALFHVSLFAYLYVIFPGGI. Topologically, residues 152–154 are cytoplasmic; that stretch reads PDD. A helical transmembrane segment spans residues 155–182; it reads PMQRGLFSLLKNHVGLLWLAYPFVWLMG. Topologically, residues 183 to 190 are extracellular; that stretch reads PAGIGFTG. Residues 191 to 223 form a helical membrane-spanning segment; sequence AVGAALTYAFLDVLAKVPYVYFFYARRQAFIDV. Position 206 is an N6-(retinylidene)lysine (Lys-206). Residues 224-254 are Cytoplasmic-facing; that stretch reads TDSRAAAKGDGPAVGGEAPVATGDDAPTAAD. The tract at residues 231–254 is disordered; sequence KGDGPAVGGEAPVATGDDAPTAAD.

The protein belongs to the archaeal/bacterial/fungal opsin family.

It localises to the cell membrane. Functionally, involved in the control of phototaxis. This Halorubrum sodomense protein is Sensory rhodopsin (sop).